Here is an 86-residue protein sequence, read N- to C-terminus: Toxin Aam2 (86 aa).

The first 20 residues, 1–20, serve as a signal peptide directing secretion; that stretch reads MNYLITISLALLLMTGVASG. One can recognise an LCN-type CS-alpha/beta domain in the interval 22–84; the sequence is RDGYIADAGN…VPIKVPGKCN (63 aa). 4 cysteine pairs are disulfide-bonded: cysteine 32–cysteine 83, cysteine 36–cysteine 56, cysteine 42–cysteine 66, and cysteine 46–cysteine 68. At asparagine 84 the chain carries Asparagine amide.

This sequence belongs to the long (4 C-C) scorpion toxin superfamily. Sodium channel inhibitor family. Alpha subfamily. In terms of tissue distribution, expressed by the venom gland.

It localises to the secreted. Alpha toxins bind voltage-independently at site-3 of sodium channels (Nav) and inhibit the inactivation of the activated channels, thereby blocking neuronal transmission. This Androctonus amoreuxi (African fattail scorpion) protein is Toxin Aam2.